We begin with the raw amino-acid sequence, 103 residues long: Large ribosomal subunit protein eL14 (103 aa).

The protein belongs to the eukaryotic ribosomal protein eL14 family.

In Pyrobaculum islandicum (strain DSM 4184 / JCM 9189 / GEO3), this protein is Large ribosomal subunit protein eL14.